The sequence spans 457 residues: ATP synthase subunit beta (457 aa).

Residue 147 to 154 (GGAGVGKT) coordinates ATP.

The protein belongs to the ATPase alpha/beta chains family. In terms of assembly, F-type ATPases have 2 components, CF(1) - the catalytic core - and CF(0) - the membrane proton channel. CF(1) has five subunits: alpha(3), beta(3), gamma(1), delta(1), epsilon(1). CF(0) has three main subunits: a(1), b(2) and c(9-12). The alpha and beta chains form an alternating ring which encloses part of the gamma chain. CF(1) is attached to CF(0) by a central stalk formed by the gamma and epsilon chains, while a peripheral stalk is formed by the delta and b chains.

Its subcellular location is the cell inner membrane. It catalyses the reaction ATP + H2O + 4 H(+)(in) = ADP + phosphate + 5 H(+)(out). Its function is as follows. Produces ATP from ADP in the presence of a proton gradient across the membrane. The catalytic sites are hosted primarily by the beta subunits. This chain is ATP synthase subunit beta, found in Actinobacillus pleuropneumoniae serotype 5b (strain L20).